The chain runs to 156 residues: Small ribosomal subunit protein uS7 (156 aa).

The protein belongs to the universal ribosomal protein uS7 family. In terms of assembly, part of the 30S ribosomal subunit. Contacts proteins S9 and S11.

One of the primary rRNA binding proteins, it binds directly to 16S rRNA where it nucleates assembly of the head domain of the 30S subunit. Is located at the subunit interface close to the decoding center, probably blocks exit of the E-site tRNA. The chain is Small ribosomal subunit protein uS7 from Symbiobacterium thermophilum (strain DSM 24528 / JCM 14929 / IAM 14863 / T).